The primary structure comprises 258 residues: Putative cysteine-rich repeat secretory protein 35 (258 aa).

Positions 1–29 (MYSSYSLSKRLIYVPILAIQFLLVRSVSS) are cleaved as a signal peptide. 2 consecutive Gnk2-homologous domains span residues 36-138 (YLNH…TIKP) and 146-255 (FKNT…LYPF).

This sequence belongs to the cysteine-rich repeat secretory protein family.

Its subcellular location is the secreted. The chain is Putative cysteine-rich repeat secretory protein 35 (CRRSP35) from Arabidopsis thaliana (Mouse-ear cress).